The following is a 696-amino-acid chain: Elongation factor G (696 aa).

Residues 8–282 (DRTRNIGIMA…AVIDYLPSPL (275 aa)) form the tr-type G domain. Residues 17-24 (AHIDAGKT), 81-85 (DTPGH), and 135-138 (NKMD) each bind GTP.

It belongs to the TRAFAC class translation factor GTPase superfamily. Classic translation factor GTPase family. EF-G/EF-2 subfamily.

The protein resides in the cytoplasm. Functionally, catalyzes the GTP-dependent ribosomal translocation step during translation elongation. During this step, the ribosome changes from the pre-translocational (PRE) to the post-translocational (POST) state as the newly formed A-site-bound peptidyl-tRNA and P-site-bound deacylated tRNA move to the P and E sites, respectively. Catalyzes the coordinated movement of the two tRNA molecules, the mRNA and conformational changes in the ribosome. This is Elongation factor G from Staphylococcus saprophyticus subsp. saprophyticus (strain ATCC 15305 / DSM 20229 / NCIMB 8711 / NCTC 7292 / S-41).